Here is a 479-residue protein sequence, read N- to C-terminus: MPRFVDRVVIHTRAGSGGNGCASVHREKFKPLGGPDGGNGGRGGSVVFVVDPQVHTLLDFHFRPHVTAASGKQGMGSNRDGAAGADLEVKVPDGTVVLDDNGRLLADLVGAGTRFEAAAGGRGGLGNAALASRARKAPGFALLGEPGQARDLTLELKTVADVGLVGFPSAGKSSLVSVISAAKPKIADYPFTTLVPNLGVVAAGGHSFTVADVPGLIPGASQGRGLGLDFLRHIERCAVLVHVVNCATAEPGRDPISDIDALEAELAAYQPTLQGDAVLDDLAERPRAVVLNKIDVPEARELAEFVEDELAQRGWPVFLVSTVTRENLQPLIFGLWQMVSEYNAARPQAAPRRPVIRPVPVDDSGFDVQADGHGGFVVTGARPERWIGQTNFDNDEAVGYLADRLVRLGVEEELLRLGAKPGCAVTIGEMTFDWEPQTPAGGHVAMSGRGTDVRLERSDRVGAAERKAARRQRRERDDD.

Residues 2–159 (PRFVDRVVIH…RDLTLELKTV (158 aa)) enclose the Obg domain. One can recognise an OBG-type G domain in the interval 160-340 (ADVGLVGFPS…LIFGLWQMVS (181 aa)). GTP contacts are provided by residues 166–173 (GFPSAGKS), 191–195 (FTTLV), 212–215 (DVPG), 292–295 (NKID), and 321–323 (STV). Mg(2+) is bound by residues serine 173 and threonine 193. The OCT domain occupies 358–436 (PVPVDDSGFD…IGEMTFDWEP (79 aa)). The interval 438–479 (TPAGGHVAMSGRGTDVRLERSDRVGAAERKAARRQRRERDDD) is disordered. Positions 451 to 467 (TDVRLERSDRVGAAERK) are enriched in basic and acidic residues.

This sequence belongs to the TRAFAC class OBG-HflX-like GTPase superfamily. OBG GTPase family. As to quaternary structure, monomer. It depends on Mg(2+) as a cofactor.

It localises to the cytoplasm. Its function is as follows. An essential GTPase which binds GTP, GDP and possibly (p)ppGpp with moderate affinity, with high nucleotide exchange rates and a fairly low GTP hydrolysis rate. Plays a role in control of the cell cycle, stress response, ribosome biogenesis and in those bacteria that undergo differentiation, in morphogenesis control. The sequence is that of GTPase Obg from Mycobacterium ulcerans (strain Agy99).